The primary structure comprises 557 residues: Phosphoribosylaminoimidazole carboxylase, chloroplastic (557 aa).

Residues 108–293 enclose the ATP-grasp domain; that stretch reads KVALLPAWIP…QFEQHLPAVV (186 aa). Position 132–189 (132–189) interacts with ATP; the sequence is WDSLDIHFMIKSRRLAYDGRGNFVAKSEEELSSAVDALGGFDRGLYAEKWAPFVKELA. Positions 387–557 are AIR carboxylase catalytic subunit; that stretch reads CSTLLGFIMG…HGWESYLKNS (171 aa).

The protein in the C-terminal section; belongs to the AIR carboxylase family. Class I subfamily.

It is found in the plastid. The protein localises to the chloroplast. The enzyme catalyses 5-amino-1-(5-phospho-D-ribosyl)imidazole-4-carboxylate + H(+) = 5-amino-1-(5-phospho-beta-D-ribosyl)imidazole + CO2. It participates in purine metabolism; IMP biosynthesis via de novo pathway; 5-amino-1-(5-phospho-D-ribosyl)imidazole-4-carboxylate from 5-amino-1-(5-phospho-D-ribosyl)imidazole (carboxylase route): step 1/1. This is Phosphoribosylaminoimidazole carboxylase, chloroplastic (PURKE) from Vigna aconitifolia (Moth bean).